We begin with the raw amino-acid sequence, 376 residues long: Alanine racemase (376 aa).

The active-site Proton acceptor; specific for D-alanine is Lys40. Residue Lys40 is modified to N6-(pyridoxal phosphate)lysine. Residue Arg138 participates in substrate binding. Tyr270 acts as the Proton acceptor; specific for L-alanine in catalysis. Met317 is a binding site for substrate.

The protein belongs to the alanine racemase family. Pyridoxal 5'-phosphate serves as cofactor.

It carries out the reaction L-alanine = D-alanine. It participates in amino-acid biosynthesis; D-alanine biosynthesis; D-alanine from L-alanine: step 1/1. In terms of biological role, catalyzes the interconversion of L-alanine and D-alanine. May also act on other amino acids. This is Alanine racemase (alr) from Lactobacillus acidophilus (strain ATCC 700396 / NCK56 / N2 / NCFM).